The following is a 257-amino-acid chain: MALVVKDDVKISEFINLSAAEKFLPAVMTSVKTVRISKVDKVIAMENDSLSDVNLLKGVKLVKDGYVCLAGLVVSGEWNLPDNCRGGVSVCLVDKRMQRDDEATLGSYRTSAAKKRFAFKLIPNYSITTADAERKVWQVLVNIRGVAMEKGFCPLSLEFVSVCIVHKSNIKLGLREKITSVSEGGPVELTEAVVDEFIESVPMADRLRKFRNQSKKGSNKYVGKRNDNKGLNKEGKLFDKVRIGQNSESSDAESSSF.

Positions 212 to 257 (NQSKKGSNKYVGKRNDNKGLNKEGKLFDKVRIGQNSESSDAESSSF) are disordered. The segment covering 224–242 (KRNDNKGLNKEGKLFDKVR) has biased composition (basic and acidic residues). Positions 247–257 (SESSDAESSSF) are enriched in low complexity.

It belongs to the tobamovirus movement protein family.

Its subcellular location is the host cytoplasm. The protein resides in the host cytoskeleton. The protein localises to the host cell junction. It localises to the host plasmodesma. Its function is as follows. Transports viral genome to neighboring plant cells directly through plasmosdesmata, without any budding. The movement protein allows efficient cell to cell propagation, by bypassing the host cell wall barrier. Forms a ribonucleoprotein complex with viral RNA. Binds microtubules and modulates microtubule stability. Can bind double-stranded DNA. The polypeptide is Movement protein (MP) (Pepper mild mottle virus (strain Spain) (PMMV-S)).